The primary structure comprises 130 residues: Small ribosomal subunit protein uS9 (130 aa).

Residues 109–130 form a disordered region; it reads RMKERKKYGLKAARRAPQFSKR. Positions 111 to 130 are enriched in basic residues; it reads KERKKYGLKAARRAPQFSKR.

This sequence belongs to the universal ribosomal protein uS9 family.

In Lachnoclostridium phytofermentans (strain ATCC 700394 / DSM 18823 / ISDg) (Clostridium phytofermentans), this protein is Small ribosomal subunit protein uS9.